The following is a 204-amino-acid chain: Putative peroxiredoxin ycf42 (204 aa).

Residues 5–163 (PKIGKTPPNF…LLRILESIQY (159 aa)) form the Thioredoxin domain.

It belongs to the peroxiredoxin family. AhpC/Prx1 subfamily.

It localises to the plastid. The protein resides in the chloroplast. It carries out the reaction a hydroperoxide + [protein]-dithiol = [protein]-disulfide + an alcohol + H2O. The polypeptide is Putative peroxiredoxin ycf42 (ycf42) (Trieres chinensis (Marine centric diatom)).